The chain runs to 387 residues: Galactokinase (387 aa).

33–36 (EHID) is a substrate binding site. ATP contacts are provided by residues serine 67 and 124-130 (GAGLSSS). Serine 130 and glutamate 162 together coordinate Mg(2+). The active-site Proton acceptor is the aspartate 174. Tyrosine 224 contacts substrate.

The protein belongs to the GHMP kinase family. GalK subfamily.

Its subcellular location is the cytoplasm. It carries out the reaction alpha-D-galactose + ATP = alpha-D-galactose 1-phosphate + ADP + H(+). The protein operates within carbohydrate metabolism; galactose metabolism. Catalyzes the transfer of the gamma-phosphate of ATP to D-galactose to form alpha-D-galactose-1-phosphate (Gal-1-P). The polypeptide is Galactokinase (Clostridium perfringens (strain ATCC 13124 / DSM 756 / JCM 1290 / NCIMB 6125 / NCTC 8237 / Type A)).